Reading from the N-terminus, the 443-residue chain is MYLPQEIIRKKRDNVELTADEINFFIQGIAKETMSEGQIAAFAMAIYFNDMTMDERVALTCAMRDSGMVIDWSHMNFDGPIVDKHSTGGVGDVTSLMLGPMVAACGGFVPMISGRGLGHTGGTLDKLESIPGYNITPTNDVFGQVTKDAGVAIIGQTGDLAPADKRVYATRDVTATVDNISLITASILSKKLAAGLGSLVMDVKVGSGAFMPTYEASEDLAKSIVAVANGAGTKTTALLTDMNQVLASTAGNALEVREAVQFLTGEYRNPRLFEVTMALCAEMLVNSGLASDIEQAREQLQAVLDNGKAATCFGKMVAGLGGPVDFMENYDNYLEKAEIAKPVFAETTGYAYAMDTRGLGMAVVGMGGGRRVASDSIDYAVGLSDMIRLGDEVNTDTALCVIHARSEAQWQEAANAVRANITIADEKPAPTPDVYRRIRAEDI.

This sequence belongs to the thymidine/pyrimidine-nucleoside phosphorylase family. Homodimer.

It carries out the reaction thymidine + phosphate = 2-deoxy-alpha-D-ribose 1-phosphate + thymine. Its pathway is pyrimidine metabolism; dTMP biosynthesis via salvage pathway; dTMP from thymine: step 1/2. Its function is as follows. The enzymes which catalyze the reversible phosphorolysis of pyrimidine nucleosides are involved in the degradation of these compounds and in their utilization as carbon and energy sources, or in the rescue of pyrimidine bases for nucleotide synthesis. The sequence is that of Thymidine phosphorylase from Photobacterium profundum (strain SS9).